The chain runs to 642 residues: Kinesin-like protein KIF12 (642 aa).

The segment covering 1 to 13 has biased composition (basic and acidic residues); it reads MEERGSPDGDPAR. Residues 1 to 25 form a disordered region; that stretch reads MEERGSPDGDPARNLEQGPEGSETP. S6 carries the post-translational modification Phosphoserine. One can recognise a Kinesin motor domain in the interval 25-360; the sequence is PIQVVLRVRP…LRYASRAQRI (336 aa). Residue 104–111 coordinates ATP; that stretch reads GQTGSGKT. S369 is subject to Phosphoserine. Residues 376–465 adopt a coiled-coil conformation; sequence QQVENELLRL…QVHDLERRLL (90 aa). Disordered regions lie at residues 531-561 and 579-642; these read GHISQSVWPPPWAPPPSPGSAKPPRERSQSD and PSAP…LSSC. Pro residues predominate over residues 538 to 548; that stretch reads WPPPWAPPPSP. A compositionally biased stretch (polar residues) spans 610–642; sequence TLTQQINSSLHLSQRQPQPSEDTQSPGQGLSSC. S634 is modified (phosphoserine).

It belongs to the TRAFAC class myosin-kinesin ATPase superfamily. Kinesin family. Expressed in the liver.

The protein resides in the cytoplasm. It localises to the cytoskeleton. The protein is Kinesin-like protein KIF12 (Kif12) of Mus musculus (Mouse).